Consider the following 215-residue polypeptide: RNA pyrophosphohydrolase (215 aa).

Residues 6-149 (GFRPNVGIIL…KRDVYQLALT (144 aa)) enclose the Nudix hydrolase domain. Residues 38–59 (GGIKYGETPMQAMYRELHEETG) carry the Nudix box motif.

This sequence belongs to the Nudix hydrolase family. RppH subfamily. The cofactor is a divalent metal cation.

Accelerates the degradation of transcripts by removing pyrophosphate from the 5'-end of triphosphorylated RNA, leading to a more labile monophosphorylated state that can stimulate subsequent ribonuclease cleavage. The protein is RNA pyrophosphohydrolase of Burkholderia lata (strain ATCC 17760 / DSM 23089 / LMG 22485 / NCIMB 9086 / R18194 / 383).